The chain runs to 197 residues: Recombination protein RecR (197 aa).

The C4-type zinc-finger motif lies at 56–71 (CHVCGNYCESDTCNIC). Residues 79–174 (RIICVVEESK…KITKLASGIP (96 aa)) form the Toprim domain.

This sequence belongs to the RecR family.

Functionally, may play a role in DNA repair. It seems to be involved in an RecBC-independent recombinational process of DNA repair. It may act with RecF and RecO. This is Recombination protein RecR from Fusobacterium nucleatum subsp. nucleatum (strain ATCC 25586 / DSM 15643 / BCRC 10681 / CIP 101130 / JCM 8532 / KCTC 2640 / LMG 13131 / VPI 4355).